The primary structure comprises 557 residues: Formate--tetrahydrofolate ligase (557 aa).

66–73 (TPAGEGKT) is a binding site for ATP.

This sequence belongs to the formate--tetrahydrofolate ligase family.

It catalyses the reaction (6S)-5,6,7,8-tetrahydrofolate + formate + ATP = (6R)-10-formyltetrahydrofolate + ADP + phosphate. It participates in one-carbon metabolism; tetrahydrofolate interconversion. The chain is Formate--tetrahydrofolate ligase from Bartonella tribocorum (strain CIP 105476 / IBS 506).